The sequence spans 98 residues: NADH-ubiquinone oxidoreductase chain 4L (98 aa).

3 consecutive transmembrane segments (helical) span residues 1 to 21 (MIPTYMNIMLAFTISLLGMLI), 29 to 49 (SLLCLEGMMMSLFIMTTLIAL), and 61 to 81 (IILLVFAACEAAVGLALLVSI).

It belongs to the complex I subunit 4L family. As to quaternary structure, core subunit of respiratory chain NADH dehydrogenase (Complex I) which is composed of 45 different subunits.

Its subcellular location is the mitochondrion inner membrane. The catalysed reaction is a ubiquinone + NADH + 5 H(+)(in) = a ubiquinol + NAD(+) + 4 H(+)(out). Core subunit of the mitochondrial membrane respiratory chain NADH dehydrogenase (Complex I) which catalyzes electron transfer from NADH through the respiratory chain, using ubiquinone as an electron acceptor. Part of the enzyme membrane arm which is embedded in the lipid bilayer and involved in proton translocation. In Macaca ochreata (Booted macaque), this protein is NADH-ubiquinone oxidoreductase chain 4L (MT-ND4L).